Here is a 221-residue protein sequence, read N- to C-terminus: Endonuclease V (221 aa).

Asp-43 and Asp-109 together coordinate Mg(2+).

This sequence belongs to the endonuclease V family. Mg(2+) serves as cofactor.

It localises to the cytoplasm. It catalyses the reaction Endonucleolytic cleavage at apurinic or apyrimidinic sites to products with a 5'-phosphate.. Functionally, DNA repair enzyme involved in the repair of deaminated bases. Selectively cleaves double-stranded DNA at the second phosphodiester bond 3' to a deoxyinosine leaving behind the intact lesion on the nicked DNA. The sequence is that of Endonuclease V from Petrotoga mobilis (strain DSM 10674 / SJ95).